We begin with the raw amino-acid sequence, 150 residues long: uncharacterized protein (150 aa).

This is an uncharacterized protein from Azospirillum brasilense.